The primary structure comprises 509 residues: tRNA-2-methylthio-N(6)-dimethylallyladenosine synthase (509 aa).

Positions 1-15 (MNEQQRLASRQANSS) are enriched in polar residues. A disordered region spans residues 1–25 (MNEQQRLASRQANSSTKKEEKDYSK). Positions 16–25 (TKKEEKDYSK) are enriched in basic and acidic residues. Positions 66–184 (RKFYIRTYGC…LPYILKDAMF (119 aa)) constitute an MTTase N-terminal domain. [4Fe-4S] cluster contacts are provided by Cys-75, Cys-111, Cys-145, Cys-221, Cys-225, and Cys-228. The Radical SAM core domain maps to 207–437 (RRGDIKAWVN…NTLVNEYGVN (231 aa)). Residues 440–503 (KRYIGQIVEV…TWSLNGELVK (64 aa)) enclose the TRAM domain.

This sequence belongs to the methylthiotransferase family. MiaB subfamily. In terms of assembly, monomer. Requires [4Fe-4S] cluster as cofactor.

Its subcellular location is the cytoplasm. The catalysed reaction is N(6)-dimethylallyladenosine(37) in tRNA + (sulfur carrier)-SH + AH2 + 2 S-adenosyl-L-methionine = 2-methylsulfanyl-N(6)-dimethylallyladenosine(37) in tRNA + (sulfur carrier)-H + 5'-deoxyadenosine + L-methionine + A + S-adenosyl-L-homocysteine + 2 H(+). Functionally, catalyzes the methylthiolation of N6-(dimethylallyl)adenosine (i(6)A), leading to the formation of 2-methylthio-N6-(dimethylallyl)adenosine (ms(2)i(6)A) at position 37 in tRNAs that read codons beginning with uridine. The sequence is that of tRNA-2-methylthio-N(6)-dimethylallyladenosine synthase from Bacillus mycoides (strain KBAB4) (Bacillus weihenstephanensis).